The sequence spans 268 residues: GTP cyclohydrolase 1 type 2 homolog (268 aa).

A divalent metal cation-binding residues include His-66, His-67, Asp-105, His-227, and Glu-231.

This sequence belongs to the GTP cyclohydrolase I type 2/NIF3 family. In terms of assembly, homohexamer.

This is GTP cyclohydrolase 1 type 2 homolog from Clostridium acetobutylicum (strain ATCC 824 / DSM 792 / JCM 1419 / IAM 19013 / LMG 5710 / NBRC 13948 / NRRL B-527 / VKM B-1787 / 2291 / W).